The sequence spans 153 residues: NADPH-dependent 7-cyano-7-deazaguanine reductase (153 aa).

Cysteine 51 (thioimide intermediate) is an active-site residue. The active-site Proton donor is the aspartate 58. Residues 73-75 and 92-93 each bind substrate; these read VES and HE.

Belongs to the GTP cyclohydrolase I family. QueF type 1 subfamily.

The protein localises to the cytoplasm. The enzyme catalyses 7-aminomethyl-7-carbaguanine + 2 NADP(+) = 7-cyano-7-deazaguanine + 2 NADPH + 3 H(+). The protein operates within tRNA modification; tRNA-queuosine biosynthesis. Functionally, catalyzes the NADPH-dependent reduction of 7-cyano-7-deazaguanine (preQ0) to 7-aminomethyl-7-deazaguanine (preQ1). The polypeptide is NADPH-dependent 7-cyano-7-deazaguanine reductase (Granulibacter bethesdensis (strain ATCC BAA-1260 / CGDNIH1)).